The chain runs to 141 residues: Large ribosomal subunit protein bL17 (141 aa).

The protein belongs to the bacterial ribosomal protein bL17 family. As to quaternary structure, part of the 50S ribosomal subunit. Contacts protein L32.

The polypeptide is Large ribosomal subunit protein bL17 (Sinorhizobium medicae (strain WSM419) (Ensifer medicae)).